A 569-amino-acid chain; its full sequence is Probable pyruvate decarboxylase Pdc101 (569 aa).

Positions 33 and 120 each coordinate substrate. S233 bears the Phosphoserine mark. The interval 396-478 (DSWFNGLQMK…FLLNNRGYTI (83 aa)) is thiamine pyrophosphate binding. Positions 446, 473, and 475 each coordinate Mg(2+). Residue E479 coordinates substrate. Residue T521 is modified to Phosphothreonine. A Phosphoserine modification is found at S522.

The protein belongs to the TPP enzyme family. In terms of assembly, homotetramer. A metal cation serves as cofactor. Requires thiamine diphosphate as cofactor.

The enzyme catalyses a 2-oxocarboxylate + H(+) = an aldehyde + CO2. The protein is Probable pyruvate decarboxylase Pdc101 (pdc101) of Schizosaccharomyces pombe (strain 972 / ATCC 24843) (Fission yeast).